A 187-amino-acid chain; its full sequence is CASP-like protein 3A2 (187 aa).

Over 1-24 (MTSNGEGGEVVAKRRRKGIKELVQ) the chain is Cytoplasmic. The chain crosses the membrane as a helical span at residues 25-45 (VALRGGCLAASATAMAVMLTA). Over 46 to 71 (TEEGVADIYGFKLTLSSNWSFSPSYQ) the chain is Extracellular. An N-linked (GlcNAc...) asparagine glycan is attached at N63. Residues 72–92 (YVVGACAGTVLYSLLQLCLGV) form a helical membrane-spanning segment. At 93–107 (YRLVTGSPITPSRFQ) the chain is on the cytoplasmic side. The helical transmembrane segment at 108 to 128 (AWLCFTSDQLFCYLMMSAGSA) threads the bilayer. Over 129–162 (GSGVTNLNKTGIRHTPLPDFCKTLSSFCNHVALS) the chain is Extracellular. N-linked (GlcNAc...) asparagine glycosylation is present at N136. Residues 163 to 183 (LLLVFLSFIFLASSSFFTVLV) form a helical membrane-spanning segment. At 184-187 (LSTP) the chain is on the cytoplasmic side.

This sequence belongs to the Casparian strip membrane proteins (CASP) family. In terms of assembly, homodimer and heterodimers.

The protein localises to the cell membrane. In Arabidopsis thaliana (Mouse-ear cress), this protein is CASP-like protein 3A2.